Reading from the N-terminus, the 316-residue chain is MTSKNPIQKALYLAFERTQWSVLRDAVPMTLSEQDLENLRGINEKVSLTEVTDIYLPLSRLLNLIVKAKQQRGLVLDEFLGQKPSSSPYIISIAGSVAVGKSTTARILQALLRHWPEHPKVDLVTTDGFLYPLADLKRKGLLQRKGFPESYDMKMLVEFIAAVKSGQAHVNAPIYSHVTYDRIRGQHQTVSQPDILILEGLNVLQTGLDSPVDIRRPFVSDFVDFSIYVDAEEHLLKQWYQERFLQFRKGAFSDEKSYFHHYASLTDDEANVIAAKIWDTINGPNLQLNIQPTRERAHLILQKGQDHLMSHVLLRK.

An ATP-binding site is contributed by 95–102 (GSVAVGKS).

Belongs to the prokaryotic pantothenate kinase family.

It is found in the cytoplasm. It catalyses the reaction (R)-pantothenate + ATP = (R)-4'-phosphopantothenate + ADP + H(+). Its pathway is cofactor biosynthesis; coenzyme A biosynthesis; CoA from (R)-pantothenate: step 1/5. This is Pantothenate kinase from Shewanella sp. (strain MR-7).